The chain runs to 309 residues: MILTVTMNPSIDISYPLDELKIDTVNRVVDVTKTAGGKGLNVTRVLSEFGDSVLATGLVGGKLGEFLVEHIDNQVKKDFFSIKGETRNCIAILHGDNQTEVLEKGPEVLEQEGQEFLEHFKKLLESVEVVAISGSLPAGLPVDYYASLVELANQAGKHVVLDCSGAALQAVLESPHKPTVIKPNNEELSQLLGREVSEDLDELKEVLQEPLFAGIEWIIVSLGANGTFAKHGDTFYKVDIPRIQVVNPVGSGDSTVAGISSGLLHKESDAELLIKANVLGMLNAQEKMTGHVNMANYQALYDQLIVKEV.

The protein belongs to the carbohydrate kinase PfkB family. LacC subfamily.

The catalysed reaction is D-tagatofuranose 6-phosphate + ATP = D-tagatofuranose 1,6-bisphosphate + ADP + H(+). Its pathway is carbohydrate metabolism; D-tagatose 6-phosphate degradation; D-glyceraldehyde 3-phosphate and glycerone phosphate from D-tagatose 6-phosphate: step 1/2. This chain is Tagatose-6-phosphate kinase, found in Streptococcus pneumoniae serotype 4 (strain ATCC BAA-334 / TIGR4).